The primary structure comprises 354 residues: 3-dehydroquinate synthase (354 aa).

NAD(+) contacts are provided by residues 100–104 (GATGD), 124–125 (TT), lysine 136, lysine 145, and 163–166 (FLKT). Glutamate 178, histidine 242, and histidine 256 together coordinate Zn(2+).

This sequence belongs to the sugar phosphate cyclases superfamily. Dehydroquinate synthase family. The cofactor is NAD(+). Co(2+) is required as a cofactor. It depends on Zn(2+) as a cofactor.

The protein localises to the cytoplasm. The enzyme catalyses 7-phospho-2-dehydro-3-deoxy-D-arabino-heptonate = 3-dehydroquinate + phosphate. It participates in metabolic intermediate biosynthesis; chorismate biosynthesis; chorismate from D-erythrose 4-phosphate and phosphoenolpyruvate: step 2/7. Its function is as follows. Catalyzes the conversion of 3-deoxy-D-arabino-heptulosonate 7-phosphate (DAHP) to dehydroquinate (DHQ). This chain is 3-dehydroquinate synthase, found in Staphylococcus aureus (strain Mu50 / ATCC 700699).